The sequence spans 162 residues: Phosphopantetheine adenylyltransferase (162 aa).

Residue Thr-10 participates in substrate binding. Residues 10–11 (TF) and His-18 each bind ATP. Substrate-binding residues include Lys-42, Leu-74, and Arg-88. Residues 89 to 91 (GLR), Glu-99, and 124 to 130 (YAFLSSS) contribute to the ATP site.

This sequence belongs to the bacterial CoaD family. As to quaternary structure, homohexamer. Requires Mg(2+) as cofactor.

Its subcellular location is the cytoplasm. The enzyme catalyses (R)-4'-phosphopantetheine + ATP + H(+) = 3'-dephospho-CoA + diphosphate. It functions in the pathway cofactor biosynthesis; coenzyme A biosynthesis; CoA from (R)-pantothenate: step 4/5. Its function is as follows. Reversibly transfers an adenylyl group from ATP to 4'-phosphopantetheine, yielding dephospho-CoA (dPCoA) and pyrophosphate. This is Phosphopantetheine adenylyltransferase from Methylococcus capsulatus (strain ATCC 33009 / NCIMB 11132 / Bath).